The following is a 258-amino-acid chain: Venom plasminogen activator LV-PA (258 aa).

Residues 1 to 18 form the signal peptide; it reads MVLITVLANLLILQLSYA. Residues 19–24 constitute a propeptide that is removed on maturation; it reads QKSSKL. Residues 25 to 249 form the Peptidase S1 domain; the sequence is VFGGDECNIN…YTDWIQSIIA (225 aa). Residue asparagine 44 is glycosylated (N-linked (GlcNAc...) asparagine). Cysteine 50 and cysteine 66 are joined by a disulfide. Residues histidine 65 and aspartate 110 each act as charge relay system in the active site. 3 disulfide bridges follow: cysteine 142–cysteine 210, cysteine 174–cysteine 189, and cysteine 200–cysteine 225. Catalysis depends on serine 204, which acts as the Charge relay system.

This sequence belongs to the peptidase S1 family. Snake venom subfamily. In terms of assembly, monomer. N-glycosylated. PubMed:17034951 shows that it contains approximately 10% carbohydrates, PubMed:10871053 shows that it contains approximately 20% carbohydrates. Expressed by the venom gland.

It localises to the secreted. Its activity is regulated as follows. Inhibited by the serine protease inhibitors NPGB, PMSF, p-aminobenzamidine and aprotinin. Not inhibited by soybean trypsin inhibitor or EDTA. In terms of biological role, snake venom serine protease that activates plasminogen. Weakly hydrolyzes the alpha chain of human fibrinogen without releasing fibrinopeptide A. Does not hydrolyze plasma kallikrein or factor Xa. Does not clot fibrinogen. Does not affect platelet function. Induces hypotensive effects on rats. Shows a preferential cleavage at Lys-|-Xaa over Arg-|-Xaa bonds. In Lachesis muta muta (Bushmaster), this protein is Venom plasminogen activator LV-PA.